The following is a 2364-amino-acid chain: Cytotoxin-L (2364 aa).

The segment at 1-91 (MSLVNKAQLQ…EVLELKNNSL (91 aa)) is four-helical bundle. The region spanning 96–468 (KNLHFIWIGG…APDVRSTINL (373 aa)) is the GT44 domain. The tract at residues 96–468 (KNLHFIWIGG…APDVRSTINL (373 aa)) is glucosyltransferase region. UDP-alpha-D-glucose contacts are provided by residues 101–103 (IWI), Asn139, 265–270 (LAAASD), and 286–288 (DVD). Mg(2+) is bound by residues Asp288, Glu515, and Ser518. 518-520 (SLW) contributes to the UDP-alpha-D-glucose binding site. The segment at 544–799 (GEDDILDFSQ…KSKNLHELST (256 aa)) is autoprocessing region. Positions 545 and 546 each coordinate Zn(2+). The 208-residue stretch at 567 to 774 (SSSMRTPNKE…EESIIKDISS (208 aa)) folds into the Peptidase C80 domain. Residues Tyr577, Lys600, and Lys647 each coordinate 1D-myo-inositol hexakisphosphate. His653 provides a ligand contact to Zn(2+). His653 serves as the catalytic For protease activity. The active-site Nucleophile; for protease activity is Cys698. A Zn(2+)-binding site is contributed by His757. The 1D-myo-inositol hexakisphosphate site is built by Lys764, Lys775, and Lys792. A translocation region region spans residues 800–1500 (LLQEIKNNSN…ESIIRNIYMP (701 aa)). 5 interaction with host SEMA6A and SEMA6B regions span residues 1433–1438 (CIKLIE), 1466–1471 (DNETKY), 1484–1495 (FTAEFSNESIIR), 1504–1511 (NLFIYSSK), and 1596–1601 (YNNLDP). Cell wall-binding repeat units follow at residues 1833–1852 (VSGLIYINDSLYYFKPPKNN), 1854–1873 (ITGFTTIDDNKYYFDPTKSG), 1876–1895 (SIGEITIDGKDYYFNKQGIL), 1926–1945 (FIGKLNIDGKIYYFEDNYRA), 1946–1965 (AVEWKSLDGETYYFNPKTGE), 1967–1986 (LKGLHQIGDNKYYFDNNGIM), 1987–2006 (QTGFITINDKVFYFNNDGVM), 2007–2026 (QVGYIEVNGKYFYFGKNGER), 2057–2076 (YNGILNFNGKIYFFDISNTA), 2077–2097 (VVGWGILDDGSTYYFDDNTAE), 2099–2118 (CIGLTVINDCKYYFDDNGIR), 2119–2138 (QLGFITINDNIFYFSESGKI), 2139–2158 (ELGYQNINGNYFYIDESGLV), 2209–2224 (ETGWIENETDKYYFDP), 2227–2249 (KKAYKGINVVDDIKYYFDENGIM), 2250–2269 (KTGLISFENNNYYFNEDGKM), 2270–2289 (QFGYLNIKDKMFYFGKDGKM), 2320–2339 (YTGWLDLDGKRYYFTDEYIA), and 2340–2359 (ATSSLTIDGYNYYFDPDTAE). Residues 1835–2364 (GLIYINDSLY…PDTAELVVSE (530 aa)) form a receptor-binding (CROPS) region region.

The protein belongs to the clostridial glucosylating toxin (LCGT) family. In terms of assembly, homomultimer; forms an inactive homomultimer at pH 8, which dissociates at pH 4, leading to cytotoxicity. Interacts with host SEMA6A; interaction promotes toxin entry into host cell. Interacts with host SEMA6B; interaction promotes toxin entry into host cell. Requires Zn(2+) as cofactor. Mn(2+) is required as a cofactor. The cofactor is Mg(2+). In terms of processing, undergoes autocatalytic cleavage to release the N-terminal part (Glucosyltransferase TcsL), which constitutes the active part of the toxin, in the host cytosol. 1D-myo-inositol hexakisphosphate-binding (InsP6) activates the peptidase C80 domain and promotes autoprocessing.

Its subcellular location is the secreted. The protein localises to the host endosome membrane. The protein resides in the host cytoplasm. It localises to the host cytosol. It is found in the host cell membrane. It catalyses the reaction L-threonyl-[protein] + UDP-alpha-D-glucose = 3-O-(alpha-D-glucosyl)-L-threonyl-[protein] + UDP + H(+). Protease activity is activated upon binding to 1D-myo-inositol hexakisphosphate (InsP6), which induces conformational reorganization. Its function is as follows. Precursor of a cytotoxin that targets the vascular endothelium, inducing an anti-inflammatory effect and resulting in lethal toxic shock syndrome. TcsL constitutes the main toxin that mediates the pathology of P.sordellii infection, an anaerobic Gram-positive bacterium found in soil and in the gastrointestinal and vaginal tracts of animals and humans; although the majority of carriers are asymptomatic, pathogenic P.sordellii infections arise rapidly and are highly lethal. This form constitutes the precursor of the toxin: it enters into host cells and mediates autoprocessing to release the active toxin (Glucosyltransferase TcsL) into the host cytosol. Targets vascular endothelium by binding to the semaphorin proteins SEMA6A and SEMA6B, and enters host cells via clathrin-mediated endocytosis. Once entered into host cells, acidification in the endosome promotes the membrane insertion of the translocation region and formation of a pore, leading to translocation of the GT44 and peptidase C80 domains across the endosomal membrane. This activates the peptidase C80 domain and autocatalytic processing, releasing the N-terminal part (Glucosyltransferase TcsL), which constitutes the active part of the toxin, in the cytosol. In terms of biological role, active form of the toxin, which is released into the host cytosol following autoprocessing and inactivates small GTPases. Acts by mediating monoglucosylation of small GTPases of the Ras (H-Ras/HRAS, K-Ras/KRAS and N-Ras/NRAS) family in host cells at the conserved threonine residue located in the switch I region ('Thr-37/35'), using UDP-alpha-D-glucose as the sugar donor. Does not catalyze monoglucosylation of Ral/RALA. Also able to catalyze monoglucosylation of some members of the Rho family (Rac1 and Rap2A), but with less efficiency than with Ras proteins. Monoglucosylation of host small GTPases completely prevents the recognition of the downstream effector, blocking the GTPases in their inactive form and leading to apoptosis. Induces an anti-inflammatory effect, mainly by inactivating Ras proteins which results in blockage of the cell cycle and killing of immune cells. The absence or moderate local inflammatory response allows C.sordellii spreading in deep tissues, production of toxin which is released in the general circulation and causes a toxic shock syndrome. This is Cytotoxin-L from Paraclostridium sordellii (Clostridium sordellii).